A 175-amino-acid chain; its full sequence is Ribosome maturation factor RimP (175 aa).

The segment at 152–175 (EFNRPTDGPGDDGDDGGDDEAGEA) is disordered. The segment covering 160–175 (PGDDGDDGGDDEAGEA) has biased composition (acidic residues).

Belongs to the RimP family.

The protein localises to the cytoplasm. Its function is as follows. Required for maturation of 30S ribosomal subunits. The chain is Ribosome maturation factor RimP from Nocardioides sp. (strain ATCC BAA-499 / JS614).